A 335-amino-acid polypeptide reads, in one-letter code: MKNMEQIDFVVTWVNDKDVDWCKRKSEFEKEYNIFQDLNSEERYREWGLMKYWFRAVEKYAPWVNKIYFITEGHVPNWLDVNHPKLVHVKHEDYIEKQFLPTFNSNVIEMNLIHLKDLSEKFVLFNDDFFINDFVKQSDFFENNLPKDTGIFSPLIPRENSLTPIILNNMEIINKYFSKKKILEQNFSKFFNIKYGKHLLKNICLLPWSDLLGFYDNHIPVSYCKSNFLEVYEKEHAIFNLTFKNKFRNKNEINHWLIRYWQLSSGNFIPRNINFGKNYAISNDPTDIINELKLSKYKIICINDGESIDNFDAVKGLMINAFEKKFPEKSSFEKK.

Belongs to the stealth family.

The chain is Capsular polysaccharide phosphotransferase WcwK (wcwK) from Streptococcus pneumoniae.